Here is a 280-residue protein sequence, read N- to C-terminus: Ribosomal RNA small subunit methyltransferase A (280 aa).

Residues Asn-11, Leu-13, Gly-37, Glu-57, Asp-85, and Asn-106 each coordinate S-adenosyl-L-methionine.

Belongs to the class I-like SAM-binding methyltransferase superfamily. rRNA adenine N(6)-methyltransferase family. RsmA subfamily.

It is found in the cytoplasm. The enzyme catalyses adenosine(1518)/adenosine(1519) in 16S rRNA + 4 S-adenosyl-L-methionine = N(6)-dimethyladenosine(1518)/N(6)-dimethyladenosine(1519) in 16S rRNA + 4 S-adenosyl-L-homocysteine + 4 H(+). Its function is as follows. Specifically dimethylates two adjacent adenosines (A1518 and A1519) in the loop of a conserved hairpin near the 3'-end of 16S rRNA in the 30S particle. May play a critical role in biogenesis of 30S subunits. This is Ribosomal RNA small subunit methyltransferase A from Campylobacter concisus (strain 13826).